The sequence spans 222 residues: GTP cyclohydrolase 1 (222 aa).

Cys111, His114, and Cys182 together coordinate Zn(2+).

Belongs to the GTP cyclohydrolase I family. In terms of assembly, toroid-shaped homodecamer, composed of two pentamers of five dimers.

The enzyme catalyses GTP + H2O = 7,8-dihydroneopterin 3'-triphosphate + formate + H(+). It functions in the pathway cofactor biosynthesis; 7,8-dihydroneopterin triphosphate biosynthesis; 7,8-dihydroneopterin triphosphate from GTP: step 1/1. In Klebsiella pneumoniae subsp. pneumoniae (strain ATCC 700721 / MGH 78578), this protein is GTP cyclohydrolase 1.